The chain runs to 261 residues: DNA repair protein RecO (261 aa).

This sequence belongs to the RecO family.

In terms of biological role, involved in DNA repair and RecF pathway recombination. The sequence is that of DNA repair protein RecO from Mycobacteroides abscessus (strain ATCC 19977 / DSM 44196 / CCUG 20993 / CIP 104536 / JCM 13569 / NCTC 13031 / TMC 1543 / L948) (Mycobacterium abscessus).